The primary structure comprises 131 residues: Agouti-signaling protein (131 aa).

Residues methionine 1 to serine 22 form the signal peptide. Asparagine 39 is a glycosylation site (N-linked (GlcNAc...) asparagine). The segment at lysine 58–arginine 96 is disordered. Positions arginine 70–alanine 84 are enriched in basic residues. 5 cysteine pairs are disulfide-bonded: cysteine 92–cysteine 107, cysteine 99–cysteine 113, cysteine 106–cysteine 124, cysteine 110–cysteine 131, and cysteine 115–cysteine 122. An Agouti domain is found at cysteine 92–cysteine 131.

It is found in the secreted. Functionally, involved in the regulation of melanogenesis. The binding of ASP to MC1R precludes alpha-MSH initiated signaling and thus blocks production of cAMP, leading to a down-regulation of eumelanogenesis (brown/black pigment) and thus increasing synthesis of pheomelanin (yellow/red pigment). The chain is Agouti-signaling protein from Rattus norvegicus (Rat).